The following is a 257-amino-acid chain: Diphthine synthase (257 aa).

S-adenosyl-L-methionine contacts are provided by residues Leu-9, Asp-85, Val-88, 113–114 (SI), Leu-164, Ala-207, and His-232.

Belongs to the diphthine synthase family. As to quaternary structure, homodimer.

It carries out the reaction 2-[(3S)-amino-3-carboxypropyl]-L-histidyl-[translation elongation factor 2] + 3 S-adenosyl-L-methionine = diphthine-[translation elongation factor 2] + 3 S-adenosyl-L-homocysteine + 3 H(+). It functions in the pathway protein modification; peptidyl-diphthamide biosynthesis. Functionally, S-adenosyl-L-methionine-dependent methyltransferase that catalyzes the trimethylation of the amino group of the modified target histidine residue in translation elongation factor 2 (EF-2), to form an intermediate called diphthine. The three successive methylation reactions represent the second step of diphthamide biosynthesis. This is Diphthine synthase from Methanococcus aeolicus (strain ATCC BAA-1280 / DSM 17508 / OCM 812 / Nankai-3).